The following is a 197-amino-acid chain: Large ribosomal subunit protein bL25 (197 aa).

This sequence belongs to the bacterial ribosomal protein bL25 family. CTC subfamily. As to quaternary structure, part of the 50S ribosomal subunit; part of the 5S rRNA/L5/L18/L25 subcomplex. Contacts the 5S rRNA. Binds to the 5S rRNA independently of L5 and L18.

In terms of biological role, this is one of the proteins that binds to the 5S RNA in the ribosome where it forms part of the central protuberance. The polypeptide is Large ribosomal subunit protein bL25 (Pseudomonas putida (strain ATCC 700007 / DSM 6899 / JCM 31910 / BCRC 17059 / LMG 24140 / F1)).